The primary structure comprises 266 residues: Interleukin-1 beta (266 aa).

A propeptide spanning residues 1–113 (MATVPEPINE…ETSSDEFLCD (113 aa)) is cleaved from the precursor.

This sequence belongs to the IL-1 family. As to quaternary structure, monomer. In its precursor form, weakly interacts with full-length MEFV; the mature cytokine does not interact at all. Interacts with integrins ITGAV:ITGBV and ITGA5:ITGB1; integrin-binding is required for IL1B signaling. Interacts with cargo receptor TMED10; the interaction is direct and is required for the secretion of IL1B mature form. Interacts with HSP90AB1; the interaction facilitates cargo translocation into the ERGIC. Interacts with HSP90B1; the interaction facilitates cargo translocation into the ERGIC.

The protein resides in the cytoplasm. Its subcellular location is the cytosol. It localises to the secreted. It is found in the lysosome. The protein localises to the extracellular exosome. Potent pro-inflammatory cytokine. Initially discovered as the major endogenous pyrogen, induces prostaglandin synthesis, neutrophil influx and activation, T-cell activation and cytokine production, B-cell activation and antibody production, and fibroblast proliferation and collagen production. Promotes Th17 differentiation of T-cells. Synergizes with IL12/interleukin-12 to induce IFNG synthesis from T-helper 1 (Th1) cells. Plays a role in angiogenesis by inducing VEGF production synergistically with TNF and IL6. Involved in transduction of inflammation downstream of pyroptosis: its mature form is specifically released in the extracellular milieu by passing through the gasdermin-D (GSDMD) pore. This chain is Interleukin-1 beta (IL1B), found in Bubalus carabanensis (Swamp type water buffalo).